The following is a 174-amino-acid chain: UPF0316 protein Dhaf_3052 (174 aa).

3 helical membrane-spanning segments follow: residues 4 to 24 (ILQFVLIIITINITYVTLTTI), 35 to 55 (VYASLLSVLEVFIYIMGLSII), and 59 to 79 (LDSYWNIAAYCCGYGVGVYLG).

The protein belongs to the UPF0316 family.

The protein localises to the cell membrane. This Desulfitobacterium hafniense (strain DSM 10664 / DCB-2) protein is UPF0316 protein Dhaf_3052.